The following is a 201-amino-acid chain: 3-isopropylmalate dehydratase small subunit (201 aa).

The protein belongs to the LeuD family. LeuD type 1 subfamily. As to quaternary structure, heterodimer of LeuC and LeuD.

The catalysed reaction is (2R,3S)-3-isopropylmalate = (2S)-2-isopropylmalate. The protein operates within amino-acid biosynthesis; L-leucine biosynthesis; L-leucine from 3-methyl-2-oxobutanoate: step 2/4. In terms of biological role, catalyzes the isomerization between 2-isopropylmalate and 3-isopropylmalate, via the formation of 2-isopropylmaleate. In Shewanella sp. (strain ANA-3), this protein is 3-isopropylmalate dehydratase small subunit.